The following is a 155-amino-acid chain: Effector protein PevD1 (155 aa).

An N-terminal signal peptide occupies residues 1–18; sequence MQFTLAAAAALFGASALA. Residues 33 to 148 form the AA1-like domain; that stretch reads NMYENIDIAD…NPTTIVIDSL (116 aa). 2 disulfide bridges follow: Cys-70/Cys-84 and Cys-125/Cys-135.

Monomer. Interacts with Arabidopsis thaliana NRP.

The protein resides in the secreted. Its function is as follows. Effector protein. Elicits a hypersensitive response (HR) in tobacco plants (N.tabacum) and cotton (G.hirsutum). Boosts systemic acquired resistance (SAR) to tobacco mosaic virus (TMV) infection in N.tabacum and to V.dhaliae infection in primed cotton seedlings. This Verticillium dahliae (Verticillium wilt) protein is Effector protein PevD1.